A 311-amino-acid chain; its full sequence is Probable deoxyhypusine synthase (311 aa).

Residue K284 is the Nucleophile of the active site.

The protein belongs to the deoxyhypusine synthase family. Requires NAD(+) as cofactor.

The catalysed reaction is [eIF5A protein]-L-lysine + spermidine = [eIF5A protein]-deoxyhypusine + propane-1,3-diamine. The protein operates within protein modification; eIF5A hypusination. Its function is as follows. Catalyzes the NAD-dependent oxidative cleavage of spermidine and the subsequent transfer of the butylamine moiety of spermidine to the epsilon-amino group of a specific lysine residue of the eIF-5A precursor protein to form the intermediate deoxyhypusine residue. This Sulfurisphaera tokodaii (strain DSM 16993 / JCM 10545 / NBRC 100140 / 7) (Sulfolobus tokodaii) protein is Probable deoxyhypusine synthase (dys).